A 501-amino-acid chain; its full sequence is Probable malate:quinone oxidoreductase (501 aa).

This sequence belongs to the MQO family. FAD is required as a cofactor.

It carries out the reaction (S)-malate + a quinone = a quinol + oxaloacetate. It functions in the pathway carbohydrate metabolism; tricarboxylic acid cycle; oxaloacetate from (S)-malate (quinone route): step 1/1. In Paenarthrobacter aurescens (strain TC1), this protein is Probable malate:quinone oxidoreductase.